Reading from the N-terminus, the 880-residue chain is Alanine--tRNA ligase (880 aa).

Zn(2+)-binding residues include His565, His569, Cys675, and His679.

The protein belongs to the class-II aminoacyl-tRNA synthetase family. Zn(2+) is required as a cofactor.

The protein resides in the cytoplasm. It carries out the reaction tRNA(Ala) + L-alanine + ATP = L-alanyl-tRNA(Ala) + AMP + diphosphate. Catalyzes the attachment of alanine to tRNA(Ala) in a two-step reaction: alanine is first activated by ATP to form Ala-AMP and then transferred to the acceptor end of tRNA(Ala). Also edits incorrectly charged Ser-tRNA(Ala) and Gly-tRNA(Ala) via its editing domain. This chain is Alanine--tRNA ligase, found in Granulibacter bethesdensis (strain ATCC BAA-1260 / CGDNIH1).